The following is a 271-amino-acid chain: Thiazole synthase (271 aa).

K95 acts as the Schiff-base intermediate with DXP in catalysis. Residues G156, 182–183, and 204–205 each bind 1-deoxy-D-xylulose 5-phosphate; these read AG and NT.

It belongs to the ThiG family. In terms of assembly, homotetramer. Forms heterodimers with either ThiH or ThiS.

It localises to the cytoplasm. The catalysed reaction is [ThiS sulfur-carrier protein]-C-terminal-Gly-aminoethanethioate + 2-iminoacetate + 1-deoxy-D-xylulose 5-phosphate = [ThiS sulfur-carrier protein]-C-terminal Gly-Gly + 2-[(2R,5Z)-2-carboxy-4-methylthiazol-5(2H)-ylidene]ethyl phosphate + 2 H2O + H(+). It participates in cofactor biosynthesis; thiamine diphosphate biosynthesis. Its function is as follows. Catalyzes the rearrangement of 1-deoxy-D-xylulose 5-phosphate (DXP) to produce the thiazole phosphate moiety of thiamine. Sulfur is provided by the thiocarboxylate moiety of the carrier protein ThiS. In vitro, sulfur can be provided by H(2)S. This is Thiazole synthase from Yersinia pestis.